The following is a 366-amino-acid chain: Histidinol-phosphate aminotransferase (366 aa).

An N6-(pyridoxal phosphate)lysine modification is found at Lys228.

Belongs to the class-II pyridoxal-phosphate-dependent aminotransferase family. Histidinol-phosphate aminotransferase subfamily. In terms of assembly, homodimer. Pyridoxal 5'-phosphate is required as a cofactor.

The enzyme catalyses L-histidinol phosphate + 2-oxoglutarate = 3-(imidazol-4-yl)-2-oxopropyl phosphate + L-glutamate. Its pathway is amino-acid biosynthesis; L-histidine biosynthesis; L-histidine from 5-phospho-alpha-D-ribose 1-diphosphate: step 7/9. The chain is Histidinol-phosphate aminotransferase from Stutzerimonas stutzeri (Pseudomonas stutzeri).